We begin with the raw amino-acid sequence, 909 residues long: Translation initiation factor IF-2 (909 aa).

A disordered region spans residues 49 to 314 (LNREQGGSAG…GKQRKTSTLQ (266 aa)). 3 stretches are compositionally biased toward basic and acidic residues: residues 99–177 (DAVE…EHKQ), 186–236 (IQSE…KWSS), and 255–270 (RAAEDENDAKVEGDRR). The span at 271–285 (ARGRSGKATRQKKNN) shows a compositional bias: basic residues. Residues 286 to 299 (KHSESKADREEARA) show a composition bias toward basic and acidic residues. Positions 408–577 (PRAPVVTIMG…LLQAEVLELK (170 aa)) constitute a tr-type G domain. Residues 417–424 (GHVDHGKT) are G1. Residue 417–424 (GHVDHGKT) coordinates GTP. Residues 442 to 446 (GITQH) are G2. The interval 463 to 466 (DTPG) is G3. GTP is bound by residues 463–467 (DTPGH) and 517–520 (NKID). Residues 517–520 (NKID) form a G4 region. The interval 553–555 (SAK) is G5.

Belongs to the TRAFAC class translation factor GTPase superfamily. Classic translation factor GTPase family. IF-2 subfamily.

The protein localises to the cytoplasm. Functionally, one of the essential components for the initiation of protein synthesis. Protects formylmethionyl-tRNA from spontaneous hydrolysis and promotes its binding to the 30S ribosomal subunits. Also involved in the hydrolysis of GTP during the formation of the 70S ribosomal complex. This is Translation initiation factor IF-2 from Photorhabdus laumondii subsp. laumondii (strain DSM 15139 / CIP 105565 / TT01) (Photorhabdus luminescens subsp. laumondii).